We begin with the raw amino-acid sequence, 858 residues long: DNA mismatch repair protein MutS (858 aa).

602–609 (GPNMSGKS) is a binding site for ATP.

Belongs to the DNA mismatch repair MutS family.

Its function is as follows. This protein is involved in the repair of mismatches in DNA. It is possible that it carries out the mismatch recognition step. This protein has a weak ATPase activity. Overexpression of mutSL partially suppresses the high spontaneous mutation frequency of a ytkD/mutM/mutY triple disruption which lacks the system required to prevent damage by oxidized guanine (8-oxo-dGTP). This suggests that MutSL also functions to repair mismatches due to oxidative stress in both growing and stationary phase cells. This is DNA mismatch repair protein MutS from Bacillus subtilis (strain 168).